Here is a 259-residue protein sequence, read N- to C-terminus: UPF0246 protein ABBFA_001173 (259 aa).

This sequence belongs to the UPF0246 family.

The polypeptide is UPF0246 protein ABBFA_001173 (Acinetobacter baumannii (strain AB307-0294)).